A 548-amino-acid polypeptide reads, in one-letter code: pH-responsive protein 1 (548 aa).

A signal peptide spans 1 to 20; sequence MYSLIKSLATFATLFSLTLA. N-linked (GlcNAc...) asparagine glycosylation is present at asparagine 41. Cysteine 82 and cysteine 111 are joined by a disulfide. N-linked (GlcNAc...) asparagine glycans are attached at residues asparagine 173 and asparagine 261. 5 cysteine pairs are disulfide-bonded: cysteine 224–cysteine 358, cysteine 242–cysteine 273, cysteine 381–cysteine 432, cysteine 390–cysteine 456, and cysteine 409–cysteine 414. Positions 483–518 are disordered; the sequence is GKASSSGGSSKSGSSSASASGSSSSSTSSGSSSSSG. Serine 517 carries GPI-anchor amidated serine lipidation. Positions 518 to 548 are cleaved as a propeptide — removed in mature form; it reads GVKATQQMSMVKLVSIITIVTAFVGGMSVVF.

The protein belongs to the glycosyl hydrolase 72 family.

It is found in the cell membrane. Its function is as follows. Required for apical cell growth and plays an essential role in morphogenesis. May be integral to the pathogenic ability of the organism. This is pH-responsive protein 1 (PHR1) from Candida albicans (strain SC5314 / ATCC MYA-2876) (Yeast).